A 363-amino-acid polypeptide reads, in one-letter code: Ribosomal RNA large subunit methyltransferase M (363 aa).

S-adenosyl-L-methionine contacts are provided by residues S190, 223 to 226 (CPGG), D242, D262, and D280. Residue K309 is the Proton acceptor of the active site.

Belongs to the class I-like SAM-binding methyltransferase superfamily. RNA methyltransferase RlmE family. RlmM subfamily. Monomer.

The protein localises to the cytoplasm. The enzyme catalyses cytidine(2498) in 23S rRNA + S-adenosyl-L-methionine = 2'-O-methylcytidine(2498) in 23S rRNA + S-adenosyl-L-homocysteine + H(+). Catalyzes the 2'-O-methylation at nucleotide C2498 in 23S rRNA. The protein is Ribosomal RNA large subunit methyltransferase M of Actinobacillus pleuropneumoniae serotype 5b (strain L20).